The sequence spans 132 residues: Profilin (132 aa).

The protein belongs to the profilin family. In terms of assembly, occurs in many kinds of cells as a complex with monomeric actin in a 1:1 ratio.

The protein resides in the cytoplasm. Its subcellular location is the cytoskeleton. Binds to actin and affects the structure of the cytoskeleton. At high concentrations, profilin prevents the polymerization of actin, whereas it enhances it at low concentrations. By binding to PIP2, it inhibits the formation of IP3 and DG. This is Profilin from Naegleria pringsheimi (Amoeba).